We begin with the raw amino-acid sequence, 405 residues long: Probable succinyl-diaminopimelate desuccinylase (405 aa).

His72 contributes to the Zn(2+) binding site. Residue Asp74 is part of the active site. Residue Asp105 coordinates Zn(2+). Residue Glu139 is the Proton acceptor of the active site. The Zn(2+) site is built by Glu140, Glu165, and His377.

This sequence belongs to the peptidase M20A family. The cofactor is Zn(2+). Co(2+) serves as cofactor.

It catalyses the reaction N-succinyl-(2S,6S)-2,6-diaminopimelate + H2O = (2S,6S)-2,6-diaminopimelate + succinate. It participates in amino-acid biosynthesis; L-lysine biosynthesis via DAP pathway; LL-2,6-diaminopimelate from (S)-tetrahydrodipicolinate (succinylase route): step 3/3. The sequence is that of Probable succinyl-diaminopimelate desuccinylase (dapE) from Staphylococcus epidermidis (strain ATCC 35984 / DSM 28319 / BCRC 17069 / CCUG 31568 / BM 3577 / RP62A).